The primary structure comprises 365 residues: Phosphoserine aminotransferase (365 aa).

Arginine 46 is a binding site for L-glutamate. Pyridoxal 5'-phosphate is bound by residues alanine 80–threonine 81, tryptophan 106, threonine 157, aspartate 177, and glutamine 200. Residue lysine 201 is modified to N6-(pyridoxal phosphate)lysine. Residue asparagine 242 to threonine 243 coordinates pyridoxal 5'-phosphate.

The protein belongs to the class-V pyridoxal-phosphate-dependent aminotransferase family. SerC subfamily. As to quaternary structure, homodimer. Pyridoxal 5'-phosphate serves as cofactor.

It localises to the cytoplasm. The enzyme catalyses O-phospho-L-serine + 2-oxoglutarate = 3-phosphooxypyruvate + L-glutamate. It catalyses the reaction 4-(phosphooxy)-L-threonine + 2-oxoglutarate = (R)-3-hydroxy-2-oxo-4-phosphooxybutanoate + L-glutamate. It participates in amino-acid biosynthesis; L-serine biosynthesis; L-serine from 3-phospho-D-glycerate: step 2/3. It functions in the pathway cofactor biosynthesis; pyridoxine 5'-phosphate biosynthesis; pyridoxine 5'-phosphate from D-erythrose 4-phosphate: step 3/5. Catalyzes the reversible conversion of 3-phosphohydroxypyruvate to phosphoserine and of 3-hydroxy-2-oxo-4-phosphonooxybutanoate to phosphohydroxythreonine. The sequence is that of Phosphoserine aminotransferase from Leptospira biflexa serovar Patoc (strain Patoc 1 / Ames).